We begin with the raw amino-acid sequence, 260 residues long: Acetylglutamate kinase (260 aa).

Residues 46–47 (GG), R68, and N160 contribute to the substrate site.

It belongs to the acetylglutamate kinase family. ArgB subfamily.

It localises to the cytoplasm. It carries out the reaction N-acetyl-L-glutamate + ATP = N-acetyl-L-glutamyl 5-phosphate + ADP. Its pathway is amino-acid biosynthesis; L-arginine biosynthesis; N(2)-acetyl-L-ornithine from L-glutamate: step 2/4. Functionally, catalyzes the ATP-dependent phosphorylation of N-acetyl-L-glutamate. The chain is Acetylglutamate kinase from Shewanella baltica (strain OS223).